Reading from the N-terminus, the 95-residue chain is Large ribosomal subunit protein bL25 (95 aa).

This sequence belongs to the bacterial ribosomal protein bL25 family. As to quaternary structure, part of the 50S ribosomal subunit; part of the 5S rRNA/L5/L18/L25 subcomplex. Contacts the 5S rRNA. Binds to the 5S rRNA independently of L5 and L18.

In terms of biological role, this is one of the proteins that binds to the 5S RNA in the ribosome where it forms part of the central protuberance. This chain is Large ribosomal subunit protein bL25, found in Shewanella halifaxensis (strain HAW-EB4).